The chain runs to 261 residues: UPF0246 protein azo1887 (261 aa).

This sequence belongs to the UPF0246 family.

The chain is UPF0246 protein azo1887 from Azoarcus sp. (strain BH72).